The primary structure comprises 367 residues: Voltage-gated potassium channel subunit beta-2 (367 aa).

The NADP(+) site is built by threonine 56, tryptophan 57, glutamine 63, and aspartate 85. The Proton donor/acceptor role is filled by tyrosine 90. Residues asparagine 158, serine 188, arginine 189, glutamine 214, tryptophan 243, serine 244, proline 245, leucine 246, alanine 247, cysteine 248, lysine 254, tyrosine 262, arginine 264, glycine 323, serine 325, glutamine 329, glutamate 332, and asparagine 333 each coordinate NADP(+).

It belongs to the shaker potassium channel beta subunit family. Forms heteromultimeric complex with alpha subunits.

It localises to the cytoplasm. It is found in the membrane. The protein resides in the cell membrane. The protein localises to the cell projection. Its subcellular location is the axon. It localises to the synapse. It is found in the synaptosome. The protein resides in the cytoskeleton. Its function is as follows. Regulatory subunit of the voltage-gated potassium (Kv) Shaker channels composed of pore-forming and potassium-conducting alpha subunits and of regulatory beta subunits. The beta-2/KCNAB2 cytoplasmic subunit may promote potassium channel closure via a mechanism that does not involve physical obstruction of the channel pore. Enhances current amplitude of Kv1.1/KCNA1 and Kv2.2/KCNA2 channels. May display nicotinamide adenine dinucleotide phosphate (NADPH)-dependent aldoketoreductase activity by catalyzing the NADPH-dependent reduction of a wide range of aldehyde and ketone substrates. The binding of oxidized and reduced nucleotide may alter Kv channel gating and contribute to dynamic fine tuning of cell excitability. In Xenopus laevis (African clawed frog), this protein is Voltage-gated potassium channel subunit beta-2 (kcnab2).